Consider the following 178-residue polypeptide: Ribosome maturation factor RimM (178 aa).

One can recognise a PRC barrel domain in the interval 101-178; it reads ADEYYWYQLV…VMRVEWDADF (78 aa).

Belongs to the RimM family. Binds ribosomal protein uS19.

The protein resides in the cytoplasm. In terms of biological role, an accessory protein needed during the final step in the assembly of 30S ribosomal subunit, possibly for assembly of the head region. Essential for efficient processing of 16S rRNA. May be needed both before and after RbfA during the maturation of 16S rRNA. It has affinity for free ribosomal 30S subunits but not for 70S ribosomes. This is Ribosome maturation factor RimM from Pseudomonas putida (strain ATCC 47054 / DSM 6125 / CFBP 8728 / NCIMB 11950 / KT2440).